The following is a 216-amino-acid chain: Ribosomal RNA large subunit methyltransferase E (216 aa).

Residues Gly-60, Trp-62, Asp-80, Asp-96, and Asp-121 each contribute to the S-adenosyl-L-methionine site. Lys-161 serves as the catalytic Proton acceptor.

It belongs to the class I-like SAM-binding methyltransferase superfamily. RNA methyltransferase RlmE family.

It is found in the cytoplasm. The enzyme catalyses uridine(2552) in 23S rRNA + S-adenosyl-L-methionine = 2'-O-methyluridine(2552) in 23S rRNA + S-adenosyl-L-homocysteine + H(+). In terms of biological role, specifically methylates the uridine in position 2552 of 23S rRNA at the 2'-O position of the ribose in the fully assembled 50S ribosomal subunit. In Pseudomonas fluorescens (strain SBW25), this protein is Ribosomal RNA large subunit methyltransferase E.